The following is a 371-amino-acid chain: Queuine tRNA-ribosyltransferase (371 aa).

D89 functions as the Proton acceptor in the catalytic mechanism. Residues 89–93 (DSGGF), D143, Q185, and G212 contribute to the substrate site. The segment at 243-249 (GVGTPED) is RNA binding. Catalysis depends on D262, which acts as the Nucleophile. The interval 267 to 271 (TRNAR) is RNA binding; important for wobble base 34 recognition. The Zn(2+) site is built by C300, C302, C305, and H331.

The protein belongs to the queuine tRNA-ribosyltransferase family. As to quaternary structure, homodimer. Within each dimer, one monomer is responsible for RNA recognition and catalysis, while the other monomer binds to the replacement base PreQ1. Zn(2+) serves as cofactor.

The enzyme catalyses 7-aminomethyl-7-carbaguanine + guanosine(34) in tRNA = 7-aminomethyl-7-carbaguanosine(34) in tRNA + guanine. It functions in the pathway tRNA modification; tRNA-queuosine biosynthesis. Catalyzes the base-exchange of a guanine (G) residue with the queuine precursor 7-aminomethyl-7-deazaguanine (PreQ1) at position 34 (anticodon wobble position) in tRNAs with GU(N) anticodons (tRNA-Asp, -Asn, -His and -Tyr). Catalysis occurs through a double-displacement mechanism. The nucleophile active site attacks the C1' of nucleotide 34 to detach the guanine base from the RNA, forming a covalent enzyme-RNA intermediate. The proton acceptor active site deprotonates the incoming PreQ1, allowing a nucleophilic attack on the C1' of the ribose to form the product. After dissociation, two additional enzymatic reactions on the tRNA convert PreQ1 to queuine (Q), resulting in the hypermodified nucleoside queuosine (7-(((4,5-cis-dihydroxy-2-cyclopenten-1-yl)amino)methyl)-7-deazaguanosine). This Nitrosomonas europaea (strain ATCC 19718 / CIP 103999 / KCTC 2705 / NBRC 14298) protein is Queuine tRNA-ribosyltransferase.